We begin with the raw amino-acid sequence, 214 residues long: Adenylate kinase (214 aa).

Gly-10 to Thr-15 lines the ATP pocket. Residues Ser-30–Val-59 form an NMP region. AMP is bound by residues Thr-31, Arg-36, Asp-57–Val-59, Gly-85–Arg-88, and Gln-92. The segment at Asn-126–Asp-163 is LID. Residue Arg-127 participates in ATP binding. Zn(2+)-binding residues include Cys-130 and Cys-133. Ile-136–Tyr-137 lines the ATP pocket. The Zn(2+) site is built by Cys-150 and Cys-153. 2 residues coordinate AMP: Arg-160 and Arg-171. Residue Leu-199 coordinates ATP.

Belongs to the adenylate kinase family. Monomer.

The protein resides in the cytoplasm. It carries out the reaction AMP + ATP = 2 ADP. It functions in the pathway purine metabolism; AMP biosynthesis via salvage pathway; AMP from ADP: step 1/1. Catalyzes the reversible transfer of the terminal phosphate group between ATP and AMP. Plays an important role in cellular energy homeostasis and in adenine nucleotide metabolism. This chain is Adenylate kinase, found in Thermosipho africanus (strain TCF52B).